The chain runs to 729 residues: Rab-like protein 6 (729 aa).

The residue at position 1 (methionine 1) is an N-acetylmethionine. The small GTPase-like stretch occupies residues 39-279; that stretch reads GVQYNMKIVI…IFLEMMEARS (241 aa). Residues 50 to 57, 100 to 104, and 177 to 179 contribute to the GTP site; these read GDRNTGKT, DVVDK, and YRD. The interval 281–729 is disordered; that stretch reads GHASPLAANG…HPGGGDYEEL (449 aa). A compositionally biased stretch (low complexity) spans 290 to 315; that stretch reads GQSPSPGSQSPVVPAGAVSTGSSSPG. Residues 331 to 351 are compositionally biased toward pro residues; that stretch reads SSVPPVPPSEALPPPACPSAP. Residues 395 to 416 show a composition bias toward basic and acidic residues; that stretch reads PDDRLDRSFLEDTTPARDEKKV. Serine 402, serine 425, serine 427, serine 470, serine 471, serine 492, serine 525, and serine 577 each carry phosphoserine. Residues 489-502 are compositionally biased toward polar residues; that stretch reads QQCSEPETKWSSIP. The segment covering 581–595 has biased composition (basic and acidic residues); the sequence is DTQRRADDFPVRDDP. Position 596 is a phosphoserine (serine 596). Over residues 596–605 the composition is skewed to acidic residues; that stretch reads SDVTDEDEGP. Threonine 599 carries the phosphothreonine modification. The span at 606–615 shows a compositional bias: pro residues; it reads AEPPPPPKLP. The segment covering 635–652 has biased composition (basic and acidic residues); sequence AGPKESSEEGKEGKTPSK. Phosphoserine is present on residues serine 640 and serine 641. Residues 655–693 are interaction with CDKN2A; it reads KKKKKKGKEEEEKAAKKKSKHKKSKDKEEGKEERRRRQQ. A compositionally biased stretch (basic residues) spans 669–678; it reads AKKKSKHKKS. Residues 679–689 are compositionally biased toward basic and acidic residues; that stretch reads KDKEEGKEERR. The span at 711 to 729 shows a compositional bias: gly residues; it reads LGGGAPGGRHPGGGDYEEL.

Belongs to the small GTPase superfamily. Rab family. Isoform 1 is O-glycosylated, while other isoforms are not.

It localises to the cytoplasm. The protein resides in the nucleus. Functionally, may enhance cellular proliferation. May reduce growth inhibitory activity of CDKN2A. This chain is Rab-like protein 6 (RABL6), found in Homo sapiens (Human).